A 284-amino-acid chain; its full sequence is 8-methylmenaquinol:fumarate reductase membrane anchor subunit (284 aa).

As to quaternary structure, the MFR complex is composed of three subunits: a flavoprotein (SdhA), an iron-sulfur protein (SdhB), and one hydrophobic anchor protein (SdhE).

The protein localises to the periplasm. The protein resides in the cell membrane. It catalyses the reaction 8-methylmenaquinone-6 + succinate = 8-methylmenaquinol-6 + fumarate. Membrane anchor subunit of 8-methylmenaquinol:fumarate reductase (MFR), that catalyzes the reduction of fumarate using 8-methylmenaquinol-6 as electron donor. The complex shows no succinate oxidation activity. Is involved in anaerobic metabolism. SdhE likely contains the quinol/quinone binding site. The chain is 8-methylmenaquinol:fumarate reductase membrane anchor subunit from Wolinella succinogenes (strain ATCC 29543 / DSM 1740 / CCUG 13145 / JCM 31913 / LMG 7466 / NCTC 11488 / FDC 602W) (Vibrio succinogenes).